Here is a 229-residue protein sequence, read N- to C-terminus: Response regulator SaeR (229 aa).

A Response regulatory domain is found at 3–116; the sequence is HLLIVDDEKD…ELVLRTNNLL (114 aa). At Asp51 the chain carries 4-aspartylphosphate. The segment at residues 128 to 227 is a DNA-binding region (ompR/PhoB-type); sequence IEQLEFDGLV…VWGLGYKFER (100 aa).

Phosphorylated by SaeS.

The protein resides in the cytoplasm. Functionally, member of the two-component regulatory system SaeR/SaeS. Probably functions as a transcriptional regulator via a specific DNA-binding domain, recognizing motifs near the promoter sequences of target genes. The chain is Response regulator SaeR (saeR) from Staphylococcus epidermidis (strain ATCC 35984 / DSM 28319 / BCRC 17069 / CCUG 31568 / BM 3577 / RP62A).